We begin with the raw amino-acid sequence, 214 residues long: Holliday junction branch migration complex subunit RuvA (214 aa).

A domain I region spans residues 1 to 63 (MISFLRGPVA…EDSMTLYGFA (63 aa)). Residues 64–139 (DPDEREVFEI…KLVPHGTVNG (76 aa)) are domain II. The tract at residues 139 to 143 (GAPAS) is flexible linker. Residues 144-214 (PSAQWKPQVV…SAGRQVTARG (71 aa)) form a domain III region.

This sequence belongs to the RuvA family. As to quaternary structure, homotetramer. Forms an RuvA(8)-RuvB(12)-Holliday junction (HJ) complex. HJ DNA is sandwiched between 2 RuvA tetramers; dsDNA enters through RuvA and exits via RuvB. An RuvB hexamer assembles on each DNA strand where it exits the tetramer. Each RuvB hexamer is contacted by two RuvA subunits (via domain III) on 2 adjacent RuvB subunits; this complex drives branch migration. In the full resolvosome a probable DNA-RuvA(4)-RuvB(12)-RuvC(2) complex forms which resolves the HJ.

The protein localises to the cytoplasm. Functionally, the RuvA-RuvB-RuvC complex processes Holliday junction (HJ) DNA during genetic recombination and DNA repair, while the RuvA-RuvB complex plays an important role in the rescue of blocked DNA replication forks via replication fork reversal (RFR). RuvA specifically binds to HJ cruciform DNA, conferring on it an open structure. The RuvB hexamer acts as an ATP-dependent pump, pulling dsDNA into and through the RuvAB complex. HJ branch migration allows RuvC to scan DNA until it finds its consensus sequence, where it cleaves and resolves the cruciform DNA. This is Holliday junction branch migration complex subunit RuvA from Renibacterium salmoninarum (strain ATCC 33209 / DSM 20767 / JCM 11484 / NBRC 15589 / NCIMB 2235).